The primary structure comprises 285 residues: Phosphatidylserine decarboxylase proenzyme (285 aa).

Active-site charge relay system; for autoendoproteolytic cleavage activity residues include Asp-96, His-152, and Ser-250. Catalysis depends on Ser-250, which acts as the Schiff-base intermediate with substrate; via pyruvic acid; for decarboxylase activity. Ser-250 carries the post-translational modification Pyruvic acid (Ser); by autocatalysis.

The protein belongs to the phosphatidylserine decarboxylase family. PSD-B subfamily. Prokaryotic type I sub-subfamily. Heterodimer of a large membrane-associated beta subunit and a small pyruvoyl-containing alpha subunit. It depends on pyruvate as a cofactor. Is synthesized initially as an inactive proenzyme. Formation of the active enzyme involves a self-maturation process in which the active site pyruvoyl group is generated from an internal serine residue via an autocatalytic post-translational modification. Two non-identical subunits are generated from the proenzyme in this reaction, and the pyruvate is formed at the N-terminus of the alpha chain, which is derived from the carboxyl end of the proenzyme. The autoendoproteolytic cleavage occurs by a canonical serine protease mechanism, in which the side chain hydroxyl group of the serine supplies its oxygen atom to form the C-terminus of the beta chain, while the remainder of the serine residue undergoes an oxidative deamination to produce ammonia and the pyruvoyl prosthetic group on the alpha chain. During this reaction, the Ser that is part of the protease active site of the proenzyme becomes the pyruvoyl prosthetic group, which constitutes an essential element of the active site of the mature decarboxylase.

The protein localises to the cell membrane. It carries out the reaction a 1,2-diacyl-sn-glycero-3-phospho-L-serine + H(+) = a 1,2-diacyl-sn-glycero-3-phosphoethanolamine + CO2. Its pathway is phospholipid metabolism; phosphatidylethanolamine biosynthesis; phosphatidylethanolamine from CDP-diacylglycerol: step 2/2. Catalyzes the formation of phosphatidylethanolamine (PtdEtn) from phosphatidylserine (PtdSer). This is Phosphatidylserine decarboxylase proenzyme from Acinetobacter baylyi (strain ATCC 33305 / BD413 / ADP1).